Here is a 326-residue protein sequence, read N- to C-terminus: Eukaryotic translation initiation factor 3 subunit I (326 aa).

WD repeat units lie at residues 8–47 (GHERSITQIKYNREGDLLFSCSKDQKPNVWYSLNGERLGT), 50–89 (GHQGAVWCLDVDWESRKLITGAGDMTAKIWDVEYGTVIAS), 145–184 (MTESKITSMLWGPLDETIITGHDNGNIAIWDIRKGQKVVD), 188–227 (DHSAGINDMQLSKDGTMFVTASRDTTAKLFDSESLMCLKT), and 285–326 (GHFG…NIFE).

Belongs to the eIF-3 subunit I family. As to quaternary structure, component of the eukaryotic translation initiation factor 3 (eIF-3) complex. The eIF-3 complex interacts with pix.

It is found in the cytoplasm. Functionally, component of the eukaryotic translation initiation factor 3 (eIF-3) complex, which is involved in protein synthesis of a specialized repertoire of mRNAs and, together with other initiation factors, stimulates binding of mRNA and methionyl-tRNAi to the 40S ribosome. The eIF-3 complex specifically targets and initiates translation of a subset of mRNAs involved in cell proliferation. In Drosophila simulans (Fruit fly), this protein is Eukaryotic translation initiation factor 3 subunit I.